Reading from the N-terminus, the 202-residue chain is Endothelin-1 (202 aa).

The signal sequence occupies residues 1–25 (MDYLPVLFSLLLVVFQGAPEAAVLG). Residues 26-50 (AELSTGPDSGGEKPAPSAPWRPRRS) constitute a propeptide that is removed on maturation. The tract at residues 28–48 (LSTGPDSGGEKPAPSAPWRPR) is disordered. Intrachain disulfides connect Cys-53-Cys-67 and Cys-55-Cys-63. A propeptide spanning residues 74–202 (VNTPEHIVPY…EKKVTHNRTH (129 aa)) is cleaved from the precursor. The tract at residues 110–124 (CQCASQKDKKCWTFC) is endothelin-like.

It belongs to the endothelin/sarafotoxin family.

The protein localises to the secreted. Its function is as follows. Endothelins are endothelium-derived vasoconstrictor peptides. Probable ligand for G-protein coupled receptors EDNRA and EDNRB which activates PTK2B, BCAR1, BCAR3 and, GTPases RAP1 and RHOA cascade in glomerular mesangial cells. Also binds the DEAR/FBXW7-AS1 receptor. Promotes mesenteric arterial wall remodeling via activation of ROCK signaling and subsequent colocalization of NFATC3 with F-actin filaments. NFATC3 then translocates to the nucleus where it subsequently promotes the transcription of the smooth muscle hypertrophy and differentiation marker ACTA2. The chain is Endothelin-1 (EDN1) from Felis catus (Cat).